Reading from the N-terminus, the 481-residue chain is 4-hydroxyphenylacetate 3-monooxygenase oxygenase component (481 aa).

Residues 100 to 104 (RSPDY) and His142 contribute to the substrate site. FAD is bound by residues 142–144 (HAL), 148–151 (QVNR), and Thr185. A substrate-binding site is contributed by 197–198 (ST). 444-447 (DPVR) is an FAD binding site.

This sequence belongs to the FADH(2)-utilizing monooxygenase family. In terms of assembly, homotetramer consisting of a dimer of dimers. 4-HPA 3-monooxygenase consists of a reductase component HpaC and an oxygenase component HpaB.

The enzyme catalyses 4-hydroxyphenylacetate + FADH2 + O2 = 3,4-dihydroxyphenylacetate + FAD + H2O + H(+). Its pathway is aromatic compound metabolism; 4-hydroxyphenylacetate degradation; pyruvate and succinate semialdehyde from 4-hydroxyphenylacetate: step 1/7. Utilizes FADH(2) supplied by HpaC, to catalyze the hydroxylation of 4-hydroxyphenylacetic acid, leading to the production of 3,4-dihydroxyphenylacetic acid (DHPA). This is 4-hydroxyphenylacetate 3-monooxygenase oxygenase component from Thermus thermophilus (strain ATCC 27634 / DSM 579 / HB8).